The primary structure comprises 97 residues: Large ribosomal subunit protein bL28 (97 aa).

Belongs to the bacterial ribosomal protein bL28 family.

This is Large ribosomal subunit protein bL28 from Bartonella quintana (strain Toulouse) (Rochalimaea quintana).